The chain runs to 116 residues: Aspartate 1-decarboxylase (116 aa).

Serine 25 serves as the catalytic Schiff-base intermediate with substrate; via pyruvic acid. The residue at position 25 (serine 25) is a Pyruvic acid (Ser). Threonine 57 contacts substrate. Tyrosine 58 serves as the catalytic Proton donor. Position 72–74 (glycine 72–alanine 74) interacts with substrate.

Belongs to the PanD family. In terms of assembly, heterooctamer of four alpha and four beta subunits. The cofactor is pyruvate. In terms of processing, is synthesized initially as an inactive proenzyme, which is activated by self-cleavage at a specific serine bond to produce a beta-subunit with a hydroxyl group at its C-terminus and an alpha-subunit with a pyruvoyl group at its N-terminus.

The protein localises to the cytoplasm. It carries out the reaction L-aspartate + H(+) = beta-alanine + CO2. The protein operates within cofactor biosynthesis; (R)-pantothenate biosynthesis; beta-alanine from L-aspartate: step 1/1. In terms of biological role, catalyzes the pyruvoyl-dependent decarboxylation of aspartate to produce beta-alanine. The polypeptide is Aspartate 1-decarboxylase (Helicobacter acinonychis (strain Sheeba)).